Here is a 500-residue protein sequence, read N- to C-terminus: Protein nucleotidyltransferase YdiU (500 aa).

The ATP site is built by G96, G98, R99, K119, D131, G132, R182, and R189. Residue D258 is the Proton acceptor of the active site. Residues N259 and D268 each contribute to the Mg(2+) site. D268 lines the ATP pocket.

Belongs to the SELO family. It depends on Mg(2+) as a cofactor. Mn(2+) serves as cofactor.

It catalyses the reaction L-seryl-[protein] + ATP = 3-O-(5'-adenylyl)-L-seryl-[protein] + diphosphate. The catalysed reaction is L-threonyl-[protein] + ATP = 3-O-(5'-adenylyl)-L-threonyl-[protein] + diphosphate. The enzyme catalyses L-tyrosyl-[protein] + ATP = O-(5'-adenylyl)-L-tyrosyl-[protein] + diphosphate. It carries out the reaction L-histidyl-[protein] + UTP = N(tele)-(5'-uridylyl)-L-histidyl-[protein] + diphosphate. It catalyses the reaction L-seryl-[protein] + UTP = O-(5'-uridylyl)-L-seryl-[protein] + diphosphate. The catalysed reaction is L-tyrosyl-[protein] + UTP = O-(5'-uridylyl)-L-tyrosyl-[protein] + diphosphate. Functionally, nucleotidyltransferase involved in the post-translational modification of proteins. It can catalyze the addition of adenosine monophosphate (AMP) or uridine monophosphate (UMP) to a protein, resulting in modifications known as AMPylation and UMPylation. This Rhizobium etli (strain ATCC 51251 / DSM 11541 / JCM 21823 / NBRC 15573 / CFN 42) protein is Protein nucleotidyltransferase YdiU.